The chain runs to 227 residues: Small ribosomal subunit protein uS3 (227 aa).

Residues 39-107 (VREFLDKRLV…PVHINIEEVR (69 aa)) form the KH type-2 domain.

The protein belongs to the universal ribosomal protein uS3 family. In terms of assembly, part of the 30S ribosomal subunit. Forms a tight complex with proteins S10 and S14.

Binds the lower part of the 30S subunit head. Binds mRNA in the 70S ribosome, positioning it for translation. In Marinobacter nauticus (strain ATCC 700491 / DSM 11845 / VT8) (Marinobacter aquaeolei), this protein is Small ribosomal subunit protein uS3.